The following is a 351-amino-acid chain: Probable aldo-keto reductase 2 (351 aa).

Tyr-67 (proton donor) is an active-site residue. His-134 contributes to the substrate binding site. Position 213-223 (213-223) interacts with NADP(+); sequence SPLGRGFFSAG. Residues 317–351 are disordered; that stretch reads YASTDDVRGDRYPQAMANTTWQNSETPPLSSWKAQ. Polar residues predominate over residues 332–351; that stretch reads MANTTWQNSETPPLSSWKAQ.

It belongs to the aldo/keto reductase family.

The chain is Probable aldo-keto reductase 2 from Oryza sativa subsp. japonica (Rice).